Consider the following 229-residue polypeptide: UPF0758 protein Mbar_A2303 (229 aa).

The region spanning 106-228 is the MPN domain; sequence KVCSPKDVYT…YVSLKDEGFV (123 aa). The Zn(2+) site is built by His177, His179, and Asp190. The JAMM motif motif lies at 177-190; that stretch reads HNHPSGDPSPSRED.

It belongs to the UPF0758 family.

This Methanosarcina barkeri (strain Fusaro / DSM 804) protein is UPF0758 protein Mbar_A2303.